A 391-amino-acid chain; its full sequence is F-box/kelch-repeat protein At3g16740 (391 aa).

The 47-residue stretch at 1–47 folds into the F-box domain; sequence MVQISDLPRDLTEEVLSRIPVTSMRAVRFTCKKWNTLSKDRSFTKKH. 2 Kelch repeats span residues 104–154 and 163–215; these read KIFH…YEEK and ILRF…LKGN.

Part of a SCF (ASK-cullin-F-box) protein ligase complex. Interacts with ASK11.

The protein resides in the nucleus. Its pathway is protein modification; protein ubiquitination. Functionally, component of SCF(ASK-cullin-F-box) E3 ubiquitin ligase complexes, which may mediate the ubiquitination and subsequent proteasomal degradation of target proteins. In Arabidopsis thaliana (Mouse-ear cress), this protein is F-box/kelch-repeat protein At3g16740.